The sequence spans 276 residues: MAKFKLSLVQFLVSPVKSDNLNRACKLIKEAAQKGAQIVALPECFNSPYGTTYFPEYAEKIPGESTELLSQVAKECGIYLIGGSIPEEDCGKLYNTCAVFGPDGTLLVKHRKIHLFDIDVPGKIRFQESETLSPGDSFSVFDTPYCKVGVGICYDIRFAELAQIYANKGCQLLVYPGAFNMTTGPAHWELLQRARALDNQVYVATASPARDEKASYVAWGHSTIVSPWGEVVAKAGSEETVLSAEIDLQYLAEIREQIPIRRQRRRDLYNVEEKRN.

One can recognise a CN hydrolase domain in the interval 4-248 (FKLSLVQFLV…ETVLSAEIDL (245 aa)). The active-site Proton acceptor is the E43. The active-site Proton donor is K112. Catalysis depends on C153, which acts as the Nucleophile.

The protein belongs to the carbon-nitrogen hydrolase superfamily. NIT1/NIT2 family. Homodimer.

Its subcellular location is the cytoplasm. It carries out the reaction 2-oxoglutaramate + H2O = 2-oxoglutarate + NH4(+). The enzyme catalyses 2-oxosuccinamate + H2O = oxaloacetate + NH4(+). In terms of biological role, has omega-amidase activity. The role of omega-amidase is to remove potentially toxic intermediates by converting 2-oxoglutaramate and 2-oxosuccinamate to biologically useful 2-oxoglutarate and oxaloacetate, respectively. This is Omega-amidase NIT2-A (nit2a) from Xenopus laevis (African clawed frog).